The chain runs to 360 residues: Ferredoxin--NADP reductase, leaf isozyme, chloroplastic (360 aa).

Residues 1–52 (MAAAVTAAVSLPYSNSTSLPIRTSIVAPERLVFKKVSLNNVSISGRVGTIRA) constitute a chloroplast transit peptide. The FAD-binding FR-type domain maps to 81–203 (KEPYVGRCLL…TGPVGKEMLM (123 aa)). FAD-binding positions include 139–142 (RLYS), 160–162 (CVK), Tyr-166, 177–179 (VCS), and Thr-218. Residues Ser-142 and Lys-162 each contribute to the NADP(+) site. NADP(+) is bound by residues Thr-218, 250-251 (VP), 280-281 (SR), Lys-290, 319-320 (GL), and Glu-358.

Belongs to the ferredoxin--NADP reductase type 1 family. As to quaternary structure, monomer. Interacts with TIC62 (via C-terminus). Requires FAD as cofactor.

The protein localises to the plastid. Its subcellular location is the chloroplast stroma. It is found in the chloroplast thylakoid membrane. The enzyme catalyses 2 reduced [2Fe-2S]-[ferredoxin] + NADP(+) + H(+) = 2 oxidized [2Fe-2S]-[ferredoxin] + NADPH. The protein operates within energy metabolism; photosynthesis. Functionally, may play a key role in regulating the relative amounts of cyclic and non-cyclic electron flow to meet the demands of the plant for ATP and reducing power. The polypeptide is Ferredoxin--NADP reductase, leaf isozyme, chloroplastic (PETH) (Pisum sativum (Garden pea)).